A 310-amino-acid polypeptide reads, in one-letter code: MLPLSISTSPDPASQFPTVPDLPTLTPTPSPTSGTAKMNEFTISNLCPEASDRLSLEVSPSSTGLLEPKSSTVSPAPSCTGYPIFDLTGISKQSSSGVSSTRTSSLEPKSSAVSPAPSSPEASNPNKRPAYSYNALIAMAIQNSPFKALRLSEIYAYISNNFPYYKMENGGWQNSIRHNLSLREEFYKVQTTDGKGSFWAMNTQLGSDVYIGKDCGSLRRKKNGKPRKYSKRSNTVSNPNPIPQIPSFTPSPLLATPFPLFLYISQAYAQNPNLLPMMLQNFQHFNFQNIPALSFPFPFSNSNGNPNSRN.

The segment covering 1-16 (MLPLSISTSPDPASQF) has biased composition (polar residues). 4 disordered regions span residues 1 to 37 (MLPL…GTAK), 58 to 77 (VSPS…SPAP), 92 to 126 (KQSS…SNPN), and 217 to 242 (SLRR…PNPI). The segment covering 17–35 (PTVPDLPTLTPTPSPTSGT) has biased composition (low complexity). Residues 128-220 (RPAYSYNALI…IGKDCGSLRR (93 aa)) constitute a DNA-binding region (fork-head). Residues 218 to 231 (LRRKKNGKPRKYSK) are compositionally biased toward basic residues.

Its subcellular location is the nucleus. It is found in the cytoplasm. Functionally, transcription factor. Plays a role in embryogenesis and later development, perhaps acting redundantly with forkhead protein fkh-2. The sequence is that of Forkhead box protein pes-1 from Caenorhabditis briggsae.